The sequence spans 391 residues: Pyruvate dehydrogenase E1 component subunit alpha, testis-specific form, mitochondrial (391 aa).

A mitochondrion-targeting transit peptide spans 1 to 30 (MRKMLATVLSQVFSGMVQKPALRGLLSSLK). His93, Tyr119, Arg120, Ala158, Gly166, Val168, Asp197, Gly198, Ala199, Asn226, and Tyr228 together coordinate pyruvate. The thiamine diphosphate site is built by Tyr119 and Arg120. The thiamine diphosphate site is built by Gly166, Val168, Asp197, Gly198, Ala199, and Asn226. Asp197 serves as a coordination point for Mg(2+). 2 residues coordinate Mg(2+): Asn226 and Tyr228. His293 lines the thiamine diphosphate pocket. Ser294 and Ser296 each carry phosphoserine. Ser301 carries the post-translational modification Phosphoserine; by PDK3.

As to quaternary structure, heterotetramer of two PDHA2 and two PDHB subunits. The heterotetramer interacts with DLAT, and is part of the multimeric pyruvate dehydrogenase complex that contains multiple copies of pyruvate dehydrogenase (E1), dihydrolipoamide acetyltransferase (DLAT, E2) and lipoamide dehydrogenase (DLD, E3). These subunits are bound to an inner core composed of about 48 DLAT and 12 PDHX molecules. It depends on thiamine diphosphate as a cofactor. The cofactor is Mg(2+). Testis.

The protein localises to the mitochondrion matrix. It carries out the reaction N(6)-[(R)-lipoyl]-L-lysyl-[protein] + pyruvate + H(+) = N(6)-[(R)-S(8)-acetyldihydrolipoyl]-L-lysyl-[protein] + CO2. Pyruvate dehydrogenase activity is inhibited by phosphorylation of PDHA2; it is reactivated by dephosphorylation. Functionally, the pyruvate dehydrogenase complex catalyzes the overall conversion of pyruvate to acetyl-CoA and CO(2), and thereby links the glycolytic pathway to the tricarboxylic cycle. The chain is Pyruvate dehydrogenase E1 component subunit alpha, testis-specific form, mitochondrial (Pdha2) from Rattus norvegicus (Rat).